The following is a 353-amino-acid chain: Glycerol-3-phosphate dehydrogenase [NAD(+)], cytoplasmic (353 aa).

At A2 the chain carries Blocked amino end (Ala). Residues 11-16, F98, K121, and A155 each bind NAD(+); that span reads GSGNWG. K121 contacts substrate. Residue K206 is the Proton acceptor of the active site. The NAD(+) site is built by R270 and Q299. 270-271 serves as a coordination point for substrate; sequence RN.

It belongs to the NAD-dependent glycerol-3-phosphate dehydrogenase family. Homodimer.

The protein resides in the cytoplasm. It catalyses the reaction sn-glycerol 3-phosphate + NAD(+) = dihydroxyacetone phosphate + NADH + H(+). Its pathway is phospholipid metabolism; alpha-glycerophosphate cycle. This is Glycerol-3-phosphate dehydrogenase [NAD(+)], cytoplasmic from Drosophila virilis (Fruit fly).